A 747-amino-acid polypeptide reads, in one-letter code: DNA ligase (747 aa).

NAD(+) contacts are provided by residues 113–117, 161–162, and Glu-190; these read DRAYD and SI. Catalysis depends on Lys-192, which acts as the N6-AMP-lysine intermediate. NAD(+) is bound by residues Arg-213, Glu-249, Lys-364, and Lys-388. Cys-479, Cys-482, Cys-495, and Cys-501 together coordinate Zn(2+). The 88-residue stretch at 660–747 folds into the BRCT domain; that stretch reads TTNAPLSDLT…EHDDTLTWPP (88 aa).

It belongs to the NAD-dependent DNA ligase family. LigA subfamily. It depends on Mg(2+) as a cofactor. The cofactor is Mn(2+).

The catalysed reaction is NAD(+) + (deoxyribonucleotide)n-3'-hydroxyl + 5'-phospho-(deoxyribonucleotide)m = (deoxyribonucleotide)n+m + AMP + beta-nicotinamide D-nucleotide.. DNA ligase that catalyzes the formation of phosphodiester linkages between 5'-phosphoryl and 3'-hydroxyl groups in double-stranded DNA using NAD as a coenzyme and as the energy source for the reaction. It is essential for DNA replication and repair of damaged DNA. This is DNA ligase from Haloquadratum walsbyi (strain DSM 16790 / HBSQ001).